The sequence spans 723 residues: Malate synthase G (723 aa).

Residues Val118, 125–126 (RY), Ser274, and Arg311 contribute to the acetyl-CoA site. The Proton acceptor role is filled by Arg338. Residues Arg338, Glu427, and 452 to 455 (GFLD) contribute to the glyoxylate site. Residues Glu427 and Asp455 each coordinate Mg(2+). Pro536 serves as a coordination point for acetyl-CoA. Cys617 bears the Cysteine sulfenic acid (-SOH) mark. Residue Asp631 is the Proton donor of the active site. Cys688 carries the post-translational modification Cysteine sulfenic acid (-SOH).

It belongs to the malate synthase family. GlcB subfamily. In terms of assembly, monomer. Mg(2+) is required as a cofactor.

The protein resides in the cytoplasm. It catalyses the reaction glyoxylate + acetyl-CoA + H2O = (S)-malate + CoA + H(+). Its pathway is carbohydrate metabolism; glyoxylate cycle; (S)-malate from isocitrate: step 2/2. Functionally, involved in the glycolate utilization. Catalyzes the condensation and subsequent hydrolysis of acetyl-coenzyme A (acetyl-CoA) and glyoxylate to form malate and CoA. The sequence is that of Malate synthase G from Escherichia coli O6:H1 (strain CFT073 / ATCC 700928 / UPEC).